The primary structure comprises 180 residues: Photosystem II extrinsic protein V (180 aa).

The signal sequence occupies residues 1–40 (MFSKAFSFQKVFAPARRRLLVLLLAALMAGFGWGLAPVFA). Heme c contacts are provided by Cys-73, Cys-76, His-77, and His-128.

It belongs to the cytochrome c family. PsbV subfamily. In terms of assembly, PSII is composed of 1 copy each of membrane proteins PsbA, PsbB, PsbC, PsbD, PsbE, PsbF, PsbH, PsbI, PsbJ, PsbK, PsbL, PsbM, PsbT, PsbX, PsbY, PsbZ, Psb30/Ycf12, peripheral proteins PsbO, CyanoQ (PsbQ), PsbU, PsbV and a large number of cofactors. It forms dimeric complexes. It depends on heme c as a cofactor.

Its subcellular location is the cellular thylakoid membrane. Functionally, one of the extrinsic, lumenal subunits of photosystem II (PSII). PSII is a light-driven water plastoquinone oxidoreductase, using light energy to abstract electrons from H(2)O, generating a proton gradient subsequently used for ATP formation. The extrinsic proteins stabilize the structure of photosystem II oxygen-evolving complex (OEC), the ion environment of oxygen evolution and protect the OEC against heat-induced inactivation. Low-potential cytochrome c that plays a role in the OEC of PSII. The chain is Photosystem II extrinsic protein V from Synechococcus sp. (strain JA-2-3B'a(2-13)) (Cyanobacteria bacterium Yellowstone B-Prime).